The chain runs to 244 residues: Deoxynucleotide monophosphate kinase (244 aa).

Residue K10 participates in dGMP binding. The ATP site is built by R11, G13, D15, and T16. 13 residues coordinate dGMP: I36, K37, R70, R137, G144, T145, V149, W157, D180, R182, Q183, E186, and T213.

This sequence belongs to the dNMP kinase family. In terms of assembly, homodimer. Mg(2+) serves as cofactor.

It catalyses the reaction dTMP + ATP = dTDP + ADP. It carries out the reaction dGMP + ATP = dGDP + ADP. The enzyme catalyses 5-hydroxymethyl-dCMP + ATP = 5-hydroxymethyl-dCDP + ADP. Allows the synthesis of deoxyribonucleoside triphosphates necessary for the rapid viral DNA replication. Phosphorylates dGMP, dTMP and 5-hydroxymethyl-dCMP (hmdCMP) while excluding dCMP and dAMP. The phosphorylation of 5-hydroxymethyl-dCMP represents the first step in the replacement of cytosine by hydroxymethylcytosine in new viral DNA genomes. The protein is Deoxynucleotide monophosphate kinase (1) of Escherichia phage RB69 (Bacteriophage RB69).